We begin with the raw amino-acid sequence, 235 residues long: Aspartate/glutamate leucyltransferase (235 aa).

It belongs to the R-transferase family. Bpt subfamily.

The protein localises to the cytoplasm. The enzyme catalyses N-terminal L-glutamyl-[protein] + L-leucyl-tRNA(Leu) = N-terminal L-leucyl-L-glutamyl-[protein] + tRNA(Leu) + H(+). It carries out the reaction N-terminal L-aspartyl-[protein] + L-leucyl-tRNA(Leu) = N-terminal L-leucyl-L-aspartyl-[protein] + tRNA(Leu) + H(+). Functionally, functions in the N-end rule pathway of protein degradation where it conjugates Leu from its aminoacyl-tRNA to the N-termini of proteins containing an N-terminal aspartate or glutamate. This chain is Aspartate/glutamate leucyltransferase, found in Pseudomonas syringae pv. syringae (strain B728a).